Reading from the N-terminus, the 239-residue chain is Leucine rich adaptor protein 1 (239 aa).

LRR repeat units follow at residues Leu-55 to Leu-83 and Leu-93 to Leu-114. The span at Leu-107–Ser-118 shows a compositional bias: low complexity. Residues Leu-107 to Asp-140 form a disordered region. 3 positions are modified to phosphoserine: Ser-118, Ser-126, and Ser-129.

As to quaternary structure, forms a tripartite complex with CDC42BPA/CDC42BPB and MYO18A acting as an adapter connecting both. Its binding to CDC42BPA/CDC42BPB results in their activation by abolition of their negative autoregulation. Interacts with CDC42BPA and CDC42BPB. Phosphorylated.

It is found in the cytoplasm. Its function is as follows. Acts as an activator of the canonical NF-kappa-B pathway and drive the production of pro-inflammatory cytokines. Promotes the antigen (Ag)-presenting and priming function of dendritic cells via the canonical NF-kappa-B pathway. In concert with MYO18A and CDC42BPA/CDC42BPB, is involved in modulating lamellar actomyosin retrograde flow that is crucial to cell protrusion and migration. Activates CDC42BPA/CDC42BPB and targets it to actomyosin through its interaction with MYO18A, leading to MYL9/MLC2 phosphorylation and MYH9/MYH10-dependent actomyosin assembly in the lamella. This is Leucine rich adaptor protein 1 (Lurap1) from Rattus norvegicus (Rat).